We begin with the raw amino-acid sequence, 153 residues long: UPF0178 protein CC_1215 (153 aa).

Belongs to the UPF0178 family.

This is UPF0178 protein CC_1215 from Caulobacter vibrioides (strain ATCC 19089 / CIP 103742 / CB 15) (Caulobacter crescentus).